A 910-amino-acid polypeptide reads, in one-letter code: MKKMSRNVLLQMEEEEDDDDGDIVLENLGQTIVPDLGSLESQHDFRTPEFEEFNGKPDSLFFNDGQRRIDFVLVYEDESRKETNKKGTNEKQRRKRQAYESNLICHGLQLEATRSVLDDKLVFVKVHAPWEVLCTYAEIMHIKLPLKPNDLKNRSSAFGTLNWFTKVLSVDESIIKPEQEFFTAPFEKNRMNDFYIVDRDAFFNPATRSRIVYFILSRVKYQVINNVSKFGINRLVNSGIYKAAFPLHDCKFRRQSEDPSCPNERYLLYREWAHPRSIYKKQPLDLIRKYYGEKIGIYFAWLGYYTQMLLLAAVVGVACFLYGYLNQDNCTWSKEVCHPDIGGKIIMCPQCDRLCPFWKLNITCESSKKLCIFDSFGTLVFAVFMGVWVTLFLEFWKRRQAELEYEWDTVELQQEEQARPEYEARCTHVVINEITQEEERIPFTAWGKCIRITLCASAVFFWILLIIASVIGIIVYRLSVFIVFSAKLPKNINGTDPIQKYLTPQTATSITASIISFIIIMILNTIYEKVAIMITNFELPRTQTDYENSLTMKMFLFQFVNYYSSCFYIAFFKGKFVGYPGDPVYWLGKYRNEECDPGGCLLELTTQLTIIMGGKAIWNNIQEVLLPWIMNLIGRFHRVSGSEKITPRWEQDYHLQPMGKLGLFYEYLEMIIQFGFVTLFVASFPLAPLLALVNNILEIRVDAWKLTTQFRRLVPEKAQDIGAWQPIMQGIAILAVVTNAMIIAFTSDMIPRLVYYWSFSVPPYGDHTSYTMEGYINNTLSIFKVADFKNKSKGNPYSDLGNHTTCRYRDFRYPPGHPQEYKHNIYYWHVIAAKLAFIIVMEHVIYSVKFFISYAIPDVSKRTKSKIQREKYLTQKLLHENHLKDMTKNMGVIAERMIEAVDNNLRPKSE.

The Cytoplasmic portion of the chain corresponds to 1–300; sequence MKKMSRNVLL…YGEKIGIYFA (300 aa). A helical membrane pass occupies residues 301 to 321; the sequence is WLGYYTQMLLLAAVVGVACFL. Residues 322 to 375 lie on the Extracellular side of the membrane; sequence YGYLNQDNCTWSKEVCHPDIGGKIIMCPQCDRLCPFWKLNITCESSKKLCIFDS. Residue Asn-329 is glycosylated (N-linked (GlcNAc...) asparagine). 5 cysteine pairs are disulfide-bonded: Cys-330-Cys-371, Cys-337-Cys-364, Cys-348-Cys-806, Cys-351-Cys-355, and Cys-595-Cys-600. Asn-361 carries an N-linked (GlcNAc...) asparagine glycan. Residues 376 to 396 form a helical membrane-spanning segment; the sequence is FGTLVFAVFMGVWVTLFLEFW. The Cytoplasmic segment spans residues 397–455; the sequence is KRRQAELEYEWDTVELQQEEQARPEYEARCTHVVINEITQEEERIPFTAWGKCIRITLC. The helical transmembrane segment at 456 to 476 threads the bilayer; sequence ASAVFFWILLIIASVIGIIVY. Over 477–509 the chain is Extracellular; that stretch reads RLSVFIVFSAKLPKNINGTDPIQKYLTPQTATS. Asn-493 carries N-linked (GlcNAc...) asparagine glycosylation. A helical transmembrane segment spans residues 510-530; that stretch reads ITASIISFIIIMILNTIYEKV. Residues 531–551 lie on the Cytoplasmic side of the membrane; that stretch reads AIMITNFELPRTQTDYENSLT. Residues 552 to 572 form a helical membrane-spanning segment; sequence MKMFLFQFVNYYSSCFYIAFF. The Extracellular portion of the chain corresponds to 573-601; it reads KGKFVGYPGDPVYWLGKYRNEECDPGGCL. The chain crosses the membrane as a helical span at residues 602–621; the sequence is LELTTQLTIIMGGKAIWNNI. Residues 622–663 lie on the Cytoplasmic side of the membrane; that stretch reads QEVLLPWIMNLIGRFHRVSGSEKITPRWEQDYHLQPMGKLGL. The Ca(2+) site is built by Glu-623, Glu-666, and Glu-669. 2 helical membrane-spanning segments follow: residues 664–684 and 685–705; these read FYEY…VASF and PLAP…DAWK. The Cytoplasmic portion of the chain corresponds to 706–722; it reads LTTQFRRLVPEKAQDIG. Residues 723–743 form a helical membrane-spanning segment; the sequence is AWQPIMQGIAILAVVTNAMII. The Extracellular portion of the chain corresponds to 744 to 836; it reads AFTSDMIPRL…YWHVIAAKLA (93 aa). 3 N-linked (GlcNAc...) asparagine glycosylation sites follow: Asn-777, Asn-790, and Asn-802. The helical transmembrane segment at 837-857 threads the bilayer; sequence FIIVMEHVIYSVKFFISYAIP. The Cytoplasmic segment spans residues 858–910; sequence DVSKRTKSKIQREKYLTQKLLHENHLKDMTKNMGVIAERMIEAVDNNLRPKSE.

Belongs to the anoctamin family. As to quaternary structure, homodimer. Expressed in embryonic stem cell, fetal liver, retina, chronic myologenous leukemia and intestinal cancer.

The protein resides in the cell membrane. It carries out the reaction a 1,2-diacyl-sn-glycero-3-phospho-L-serine(in) = a 1,2-diacyl-sn-glycero-3-phospho-L-serine(out). It catalyses the reaction a beta-D-galactosyl-(1&lt;-&gt;1')-N-acylsphing-4-enine(out) = a beta-D-galactosyl-(1&lt;-&gt;1')-N-acylsphing-4-enine(in). The enzyme catalyses a 1,2-diacyl-sn-glycero-3-phosphocholine(in) = a 1,2-diacyl-sn-glycero-3-phosphocholine(out). Exhibits synergistic gating by Ca(2+) and voltage. Inhibited by some non-specific cation channel blockers such as: ruthenium red, 2-aminoethyl diphenylborinate (2APB), gadolinium and cadmium ions. With respect to regulation, (Microbial infection) Activated by SARS coronavirus-2/SARS-CoV-2 spike protein. Functionally, small-conductance calcium-activated nonselective cation (SCAN) channel which acts as a regulator of phospholipid scrambling in platelets and osteoblasts. Phospholipid scrambling results in surface exposure of phosphatidylserine which in platelets is essential to trigger the clotting system whereas in osteoblasts is essential for the deposition of hydroxyapatite during bone mineralization. Has calcium-dependent phospholipid scramblase activity; scrambles phosphatidylserine, phosphatidylcholine and galactosylceramide. Can generate outwardly rectifying chloride channel currents in airway epithelial cells and Jurkat T lymphocytes. In terms of biological role, (Microbial infection) Upon SARS coronavirus-2/SARS-CoV-2 infection, is activated by spike protein which increases the amplitude of spontaneous Ca(2+) signals and is required for spike-mediated syncytia. This chain is Anoctamin-6, found in Homo sapiens (Human).